Here is a 145-residue protein sequence, read N- to C-terminus: Endoribonuclease YbeY (145 aa).

Positions 109, 113, and 119 each coordinate Zn(2+).

Belongs to the endoribonuclease YbeY family. Zn(2+) serves as cofactor.

It localises to the cytoplasm. Functionally, single strand-specific metallo-endoribonuclease involved in late-stage 70S ribosome quality control and in maturation of the 3' terminus of the 16S rRNA. The polypeptide is Endoribonuclease YbeY (Vesicomyosocius okutanii subsp. Calyptogena okutanii (strain HA)).